Here is a 205-residue protein sequence, read N- to C-terminus: SREBP regulating gene protein (205 aa).

At 1–16 (MVNLAAMVWRRLLRKR) the chain is on the cytoplasmic side. The chain crosses the membrane as a helical span at residues 17-35 (WVLALVFGLSLVYFLSSTF). Residues 36 to 205 (KQEERAVRDR…GESPPELFPA (170 aa)) lie on the Lumenal side of the membrane. A glycan (N-linked (GlcNAc...) asparagine) is linked at asparagine 67.

The protein belongs to the SPRING family. In terms of assembly, interacts with SCAP.

The protein resides in the golgi apparatus membrane. Its function is as follows. Positively regulates hepatic SREBP signaling pathway by modulating the proper localization of SCAP (SREBP cleavage-activating protein) to the endoplasmic reticulum, thereby controlling the level of functional SCAP. The polypeptide is SREBP regulating gene protein (Homo sapiens (Human)).